Here is a 105-residue protein sequence, read N- to C-terminus: UPF0235 protein A1G_07140 (105 aa).

This sequence belongs to the UPF0235 family.

The polypeptide is UPF0235 protein A1G_07140 (Rickettsia rickettsii (strain Sheila Smith)).